The following is a 367-amino-acid chain: MSVAGLKKQFYKASQLVSEKVGGAEGTKLDDDFKEMEKKVDLTSKAVTEVLTRTIEYLQPNPASRAKLTMLNTMSKIRGQVKNPGYPQSEGLLGESMIRYGKELGEDSNFGDALLDAGESMKRLAEVKDSLDIEVKQNFIDPLQNLCDKDLKEIQHHLKKLEGRRLDFDYKKKRQGKIPDEELRQAMEKFEESKEVAETSMHNLLETDIEQVSQLSALVDAQLDYHRQAVQILDELAEKLKRRMREASSRPRREYKPKPRETYDFGESDQSNGGFSCTPTPKVSASSSFRSDKPFRTSVRSIPHLDQPCCKALYDFEPENDGELGFKEGDIITLTNQIDENWYEGMINGQSGFFPLNYVEVLVPLPQ.

The membrane-binding amphipathic helix stretch occupies residues 1 to 21 (MSVAGLKKQFYKASQLVSEKV). The BAR domain occupies 18–249 (SEKVGGAEGT…LKRRMREASS (232 aa)). Residues 60–87 (PNPASRAKLTMLNTMSKIRGQVKNPGYP) are required for dimerization upon membrane association. A coiled-coil region spans residues 181–250 (EELRQAMEKF…KRRMREASSR (70 aa)). Positions 218-254 (LVDAQLDYHRQAVQILDELAEKLKRRMREASSRPRRE) are interaction with ARC. A disordered region spans residues 243-293 (RMREASSRPRREYKPKPRETYDFGESDQSNGGFSCTPTPKVSASSSFRSDK). A compositionally biased stretch (basic and acidic residues) spans 245 to 263 (REASSRPRREYKPKPRETY). Residues 268–289 (SDQSNGGFSCTPTPKVSASSSF) are compositionally biased toward polar residues. In terms of domain architecture, SH3 spans 305 to 364 (LDQPCCKALYDFEPENDGELGFKEGDIITLTNQIDENWYEGMINGQSGFFPLNYVEVLVP).

The protein belongs to the endophilin family. In terms of assembly, interacts with ARC. Interacts with SYNJ1 and DNM1. Highest level in central region of the theca of developing follicles (at protein level). Expressed at highest level in brain and testis, at high level in kidney, lung and stroma, low level in spleen and adrenal gland (at protein level). Expressed in most tissue with highest levels in small ovarian follicles, brain and testis.

It localises to the cytoplasm. The protein localises to the early endosome membrane. The protein resides in the cell projection. It is found in the podosome. Its function is as follows. Implicated in endocytosis. May recruit other proteins to membranes with high curvature. In Gallus gallus (Chicken), this protein is Endophilin-A2.